A 200-amino-acid chain; its full sequence is Mediator of RNA polymerase II transcription subunit 22 (200 aa).

The stretch at 93 to 122 forms a coiled coil; the sequence is SVNEAIDQRNQQLRALQEECDRKLITLRDE. Residues 167 to 200 are disordered; the sequence is SAPLLASPETGAGPLQSAAPVHSHGGGPGPTEHT. Residues 190–200 show a composition bias toward gly residues; it reads HGGGPGPTEHT.

It belongs to the Mediator complex subunit 22 family. Component of the Mediator complex, which is composed of MED1, MED4, MED6, MED7, MED8, MED9, MED10, MED11, MED12, MED13, MED13L, MED14, MED15, MED16, MED17, MED18, MED19, MED20, MED21, MED22, MED23, MED24, MED25, MED26, MED27, MED29, MED30, MED31, CCNC, CDK8 and CDC2L6/CDK11. The MED12, MED13, CCNC and CDK8 subunits form a distinct module termed the CDK8 module. Mediator containing the CDK8 module is less active than Mediator lacking this module in supporting transcriptional activation. Individual preparations of the Mediator complex lacking one or more distinct subunits have been variously termed ARC, CRSP, DRIP, PC2, SMCC and TRAP.

It is found in the nucleus. Its function is as follows. Component of the Mediator complex, a coactivator involved in the regulated transcription of nearly all RNA polymerase II-dependent genes. Mediator functions as a bridge to convey information from gene-specific regulatory proteins to the basal RNA polymerase II transcription machinery. Mediator is recruited to promoters by direct interactions with regulatory proteins and serves as a scaffold for the assembly of a functional preinitiation complex with RNA polymerase II and the general transcription factors. This is Mediator of RNA polymerase II transcription subunit 22 (Med22) from Rattus norvegicus (Rat).